A 426-amino-acid polypeptide reads, in one-letter code: Mitogen-activated protein kinase 8 (426 aa).

The 296-residue stretch at Y26–I321 folds into the Protein kinase domain. Residues G33 to G38 and K55 contribute to the ATP site. The active-site Proton acceptor is the D151. T183 carries the phosphothreonine modification. A TXY motif is present at residues T183 to Y185. At Y185 the chain carries Phosphotyrosine. The segment at Q375–R426 is disordered. A compositionally biased stretch (low complexity) spans T384–D404. A compositionally biased stretch (polar residues) spans P405–G420.

It belongs to the protein kinase superfamily. CMGC Ser/Thr protein kinase family. MAP kinase subfamily. Mg(2+) serves as cofactor. Post-translationally, dually phosphorylated on Thr-183 and Tyr-185, which activates the enzyme. In terms of tissue distribution, strongly expressed in presumptive ectoderm and mesoderm regions and weakly expressed in endoderm regions during early stages of embryo development. Expressed in the head and dorsal regions during neurula and tailbud stages.

Its subcellular location is the cytoplasm. It is found in the nucleus. The protein localises to the synapse. The catalysed reaction is L-seryl-[protein] + ATP = O-phospho-L-seryl-[protein] + ADP + H(+). It catalyses the reaction L-threonyl-[protein] + ATP = O-phospho-L-threonyl-[protein] + ADP + H(+). With respect to regulation, activated by threonine and tyrosine phosphorylation, potentially by the dual-specificity kinase, MKK7. Indirectly activated by Wnt5a. Responds to activation by environmental stress and pro-inflammatory cytokines by phosphorylating a number of transcription factors, and thus regulating transcriptional activity. Regulates morphogenic cell movements, controlling convergent extension during gastrulation. May play a role in the regulation of the circadian clock. The chain is Mitogen-activated protein kinase 8 (mapk8) from Xenopus laevis (African clawed frog).